Here is a 752-residue protein sequence, read N- to C-terminus: Pentatricopeptide repeat-containing protein At5g13270, chloroplastic (752 aa).

The N-terminal 80 residues, 1–80 (MTILTVQSSF…LQEMDKAGVS (80 aa)), are a transit peptide targeting the chloroplast. PPR repeat units follow at residues 47-81 (QGQVENLHLVSLSKHRKLNEAFEFLQEMDKAGVSV), 82-116 (SSYSYQCLFEACRELRSLSHGRLLHDRMRMGIENP), 117-147 (SVLLQNCVLQMYCECRSLEDADKLFDEMSEL), 148-182 (NAVSRTTMISAYAEQGILDKAVGLFSGMLASGDKP), 183-217 (PSSMYTTLLKSLVNPRALDFGRQIHAHVIRAGLCS), 218-248 (NTSIETGIVNMYVKCGWLVGAKRVFDQMAVK), 249-283 (KPVACTGLMVGYTQAGRARDALKLFVDLVTEGVEW), 284-318 (DSFVFSVVLKACASLEELNLGKQIHACVAKLGLES), 319-349 (EVSVGTPLVDFYIKCSSFESACRAFQEIREP), 350-384 (NDVSWSAIISGYCQMSQFEEAVKTFKSLRSKNASI), 386-420 (NSFTYTSIFQACSVLADCNIGGQVHADAIKRSLIG), 421-451 (SQYGESALITMYSKCGCLDDANEVFESMDNP), 452-486 (DIVAWTAFISGHAYYGNASEALRLFEKMVSCGMKP), 487-522 (NSVTFIAVLTACSHAGLVEQGKHCLDTMLRKYNVAP), and 523-553 (TIDHYDCMIDIYARSGLLDEALKFMKNMPFE). The tract at residues 558–633 (SWKCFLSGCW…ELSCSWIQEK (76 aa)) is type E motif. Residues 634-664 (GKIHRFIVGDKHHPQTQEIYEKLKEFDGFME) are type E(+) motif. A type DYW motif region spans residues 665–752 (GDMFQCNMTE…EGKCSCNDYW (88 aa)).

It belongs to the PPR family. PCMP-H subfamily.

It localises to the plastid. Its subcellular location is the chloroplast. The polypeptide is Pentatricopeptide repeat-containing protein At5g13270, chloroplastic (PCMP-H90) (Arabidopsis thaliana (Mouse-ear cress)).